A 566-amino-acid polypeptide reads, in one-letter code: Protein downstream neighbor of Son (566 aa).

The tract at residues 1 to 110 (MALSVPGYSP…QPEAPVPFLD (110 aa)) is disordered. Ser28 and Ser34 each carry phosphoserine. The span at 62–72 (GGRGGGSGGGP) shows a compositional bias: gly residues. Residues 73–82 (AAARRNPFAR) show a composition bias toward low complexity.

This sequence belongs to the DONSON family. Component of the replisome complex composed of at least DONSON, MCM2, MCM7, PCNA and TICRR; interaction at least with PCNA occurs during DNA replication. Expressed in the brain, with higher levels in prenatal compared to adult brain.

The protein localises to the nucleus. Functionally, replisome component that maintains genome stability by protecting stalled or damaged replication forks. After the induction of replication stress, required for the stabilization of stalled replication forks, the efficient activation of the intra-S-phase and G/2M cell-cycle checkpoints and the maintenance of genome stability. The polypeptide is Protein downstream neighbor of Son (DONSON) (Homo sapiens (Human)).